We begin with the raw amino-acid sequence, 737 residues long: Glycogen [starch] synthase, muscle (737 aa).

S8 carries the phosphoserine; by AMPK and PKA modification. Residue S11 is modified to Phosphoserine. K39 is a UDP binding site. Positions 205 and 211 each coordinate UDP-alpha-D-glucose. Residues H291, E292, Q294, H297, and K301 each coordinate alpha-D-glucose 6-phosphate. Position 331 (R331) interacts with UDP. Position 331 (R331) interacts with UDP-alpha-D-glucose. The residue at position 412 (S412) is a Phosphoserine. Position 501 (H501) interacts with alpha-D-glucose 6-phosphate. Positions 510, 512, and 513 each coordinate UDP-alpha-D-glucose. T515 is a UDP binding site. Alpha-D-glucose 6-phosphate-binding residues include R582 and R586. The disordered stretch occupies residues 634 to 737 (YRYPRPASVP…PTSSLGEERN (104 aa)). 4 positions are modified to phosphoserine: S641, S645, S649, and S652. At S653 the chain carries Phosphoserine; by GSK3-alpha and GSK3-beta. S657 carries the post-translational modification Phosphoserine; by CK2. The segment covering 658 to 681 (EDEEDPRNGPLEEDGERYDEDEEA) has biased composition (acidic residues). The span at 682-695 (AKDRRNIRAPEWPR) shows a compositional bias: basic and acidic residues. S698 is subject to Phosphoserine. Residues 698 to 714 (SCTSSTSGSKRNSVDTA) show a composition bias toward polar residues. T700 is modified (phosphothreonine). Phosphoserine is present on S710. Over residues 715-737 (TSSSLSTPSEPLSPTSSLGEERN) the composition is skewed to low complexity. Phosphothreonine is present on T721. A phosphoserine mark is found at S727 and S731.

The protein belongs to the glycosyltransferase 3 family. As to quaternary structure, part of the GYS1-GYG1 complex, a heterooctamer composed of a tetramer of GYS1 and 2 dimers of GYG1, where each GYS1 protomer binds to one GYG1 subunit (via GYG1 C-terminus); the GYS1 tetramer may dissociate from GYG1 dimers to continue glycogen polymerization on its own. Phosphorylation at Ser-8 by AMPK inactivates the enzyme activity. Primed phosphorylation at Ser-657 (site 5) by CSNK2A1 and CSNK2A2 is required for inhibitory phosphorylation at Ser-641 (site 3a), Ser-645 (site 3b), Ser-649 (site 3c) and Ser-653 (site 4) by GSK3A an GSK3B. Phosphorylated at Ser-641 by DYRK2, leading to inactivation. Phosphorylated at Ser-641 by PASK, leading to inactivation; phosphorylation by PASK is inhibited by glycogen. Dephosphorylation at Ser-641 and Ser-645 by PP1 activates the enzyme. In terms of tissue distribution, expressed in skeletal muscle and most other cell types where glycogen is present.

It carries out the reaction [(1-&gt;4)-alpha-D-glucosyl](n) + UDP-alpha-D-glucose = [(1-&gt;4)-alpha-D-glucosyl](n+1) + UDP + H(+). It participates in glycan biosynthesis; glycogen biosynthesis. Its activity is regulated as follows. Allosteric activation by glucose-6-phosphate. Phosphorylation reduces enzyme activity by constraining a tense conformation of the tetramer through inter-subunit interaction. Phosphorylation reduces the activity towards UDP-glucose. When in the non-phosphorylated state, glycogen synthase does not require glucose-6-phosphate as an allosteric activator; when phosphorylated it does. Glycogen synthase participates in the glycogen biosynthetic process along with glycogenin and glycogen branching enzyme. Extends the primer composed of a few glucose units formed by glycogenin by adding new glucose units to it. In this context, glycogen synthase transfers the glycosyl residue from UDP-Glc to the non-reducing end of alpha-1,4-glucan. This Homo sapiens (Human) protein is Glycogen [starch] synthase, muscle.